A 516-amino-acid chain; its full sequence is MEKQNKVIIVDYGSQVTQLIARRIREAGVYSEIHPCIVTAAEVAAMSPSAVVLSGGPASVLGEDSPALDKGLLELGVPVLGICYGMQLLAHNLGGELSCSETREYGPADLKFCAGSPLWDGLKTDESSRVWMSHGDRVKKVPAGFTVTGSTETLEVAAMADDQRRIYAVQFHPEVHHSEDGVRMLHNFLFKIAGIKADWSMSSFCERVIKEVSEQVGPDDQVVCALSGGIDSTVVAVLLHKAIGHRLHCIFVDNGVLRLNEVDEVSGYLREHFDLNLTVVDARERFMKQFAGVEDPEKKRKIIGYTFIDVFDEESQKIPNVKYLAQGTLYPDVIESISHKGPSAVIKSHHNVGGLPETMKLKLIEPLRELFKDEVRKLAVELGLPDFIVWRHPFPGPGLAIRVIGEVTEERLDILRKADKIVQNELTASGWYRKVWQGFAVLLPLKTVGVMGDDRTYEHVIALRVVDSVDAMTADWVRLPSEVLERISSRIINEVKGVNRVVYDISSKPPSTIEWE.

Residues 6–198 (KVIIVDYGSQ…LFKIAGIKAD (193 aa)) form the Glutamine amidotransferase type-1 domain. The active-site Nucleophile is Cys-83. Catalysis depends on residues His-172 and Glu-174. The region spanning 199–391 (WSMSSFCERV…LGLPDFIVWR (193 aa)) is the GMPS ATP-PPase domain. ATP is bound at residue 227–233 (SGGIDST).

In terms of assembly, homodimer.

It carries out the reaction XMP + L-glutamine + ATP + H2O = GMP + L-glutamate + AMP + diphosphate + 2 H(+). Its pathway is purine metabolism; GMP biosynthesis; GMP from XMP (L-Gln route): step 1/1. Its function is as follows. Catalyzes the synthesis of GMP from XMP. The polypeptide is GMP synthase [glutamine-hydrolyzing] (Oleidesulfovibrio alaskensis (strain ATCC BAA-1058 / DSM 17464 / G20) (Desulfovibrio alaskensis)).